A 204-amino-acid chain; its full sequence is Thymidylate kinase (204 aa).

Residue 11–18 coordinates ATP; it reads GLDKSGKT.

This sequence belongs to the thymidylate kinase family.

It catalyses the reaction dTMP + ATP = dTDP + ADP. It participates in pyrimidine metabolism; dTTP biosynthesis. This chain is Thymidylate kinase (TMK), found in Ectromelia virus (strain Moscow) (ECTV).